We begin with the raw amino-acid sequence, 356 residues long: Histidinol-phosphate aminotransferase 1 (356 aa).

At lysine 213 the chain carries N6-(pyridoxal phosphate)lysine.

This sequence belongs to the class-II pyridoxal-phosphate-dependent aminotransferase family. Histidinol-phosphate aminotransferase subfamily. In terms of assembly, homodimer. Pyridoxal 5'-phosphate serves as cofactor.

It carries out the reaction L-histidinol phosphate + 2-oxoglutarate = 3-(imidazol-4-yl)-2-oxopropyl phosphate + L-glutamate. Its pathway is amino-acid biosynthesis; L-histidine biosynthesis; L-histidine from 5-phospho-alpha-D-ribose 1-diphosphate: step 7/9. The chain is Histidinol-phosphate aminotransferase 1 from Burkholderia pseudomallei (strain K96243).